The following is a 315-amino-acid chain: Ornithine carbamoyltransferase (315 aa).

Residues Ser-57–Thr-60, Gln-84, Arg-108, and His-135–Gln-138 each bind carbamoyl phosphate. Residues Asn-166, Asp-230, and Ser-234–Met-235 each bind L-ornithine. Residues Cys-270–Leu-271 and Arg-298 each bind carbamoyl phosphate.

This sequence belongs to the aspartate/ornithine carbamoyltransferase superfamily. OTCase family.

The protein localises to the cytoplasm. The catalysed reaction is carbamoyl phosphate + L-ornithine = L-citrulline + phosphate + H(+). The protein operates within amino-acid biosynthesis; L-arginine biosynthesis; L-arginine from L-ornithine and carbamoyl phosphate: step 1/3. In terms of biological role, reversibly catalyzes the transfer of the carbamoyl group from carbamoyl phosphate (CP) to the N(epsilon) atom of ornithine (ORN) to produce L-citrulline. This chain is Ornithine carbamoyltransferase, found in Thermococcus kodakarensis (strain ATCC BAA-918 / JCM 12380 / KOD1) (Pyrococcus kodakaraensis (strain KOD1)).